Here is a 794-residue protein sequence, read N- to C-terminus: E3 ubiquitin-protein ligase wwp-1 (794 aa).

Residues 1–16 (MARNEPSSQQPSSSGS) show a composition bias toward low complexity. 2 disordered regions span residues 1–31 (MARNEPSSQQPSSSGSNGTPAQQNGSAKPSK) and 155–198 (RSAG…AAPT). Positions 10–124 (QPSSSGSNGT…TRNENGEFKN (115 aa)) constitute a C2 domain. Residues 17–27 (NGTPAQQNGSA) are compositionally biased toward polar residues. Low complexity predominate over residues 161-186 (AETAASASSEASTSNGVATSSSARRP). WW domains are found at residues 219–252 (EQLPDGWEMRFDQYGRKYYVDHTTKSTTWERPST), 253–286 (QPLPQGWEMRRDPRGRVYYVDHNTRTTTWQRPTA), 324–358 (GPLPEGWEKRQDPNTSRMYFVNHVNRTTQWEDPRT), and 366–399 (QPLPDGWEMRFTEQGVPFFIDHQSKTTTYNDPRT). An HECT domain is found at 460-794 (NAVDLRRRLY…IEMTEGFGNE (335 aa)). The active-site Glycyl thioester intermediate is cysteine 762.

Interacts (via WW domains) with Kruppel-like factor klf-1. Interacts with ubiquitin-conjugating enzyme E2 ubc-18. In terms of tissue distribution, expressed in neurons localized in the head and tail of adults.

It carries out the reaction S-ubiquitinyl-[E2 ubiquitin-conjugating enzyme]-L-cysteine + [acceptor protein]-L-lysine = [E2 ubiquitin-conjugating enzyme]-L-cysteine + N(6)-ubiquitinyl-[acceptor protein]-L-lysine.. The protein operates within protein modification; protein ubiquitination. Its function is as follows. E3 ubiquitin-protein ligase which accepts ubiquitin from an E2 ubiquitin-conjugating enzyme in the form of a thioester and then directly transfers the ubiquitin to targeted substrates. Ubiquitinates klf-1. Required for diet restriction-mediated lifespan extension, acting in concert with Kruppel-like factor klf-1 in the intestine to perhaps modulate genes involved in lipid metabolism. Probably acting downstream of the Insulin/IGF-1-like signaling (IIS) mediated pathway, plays a role in the immune response to infection by the Gram-negative bacterium P.aeruginosa, at least partly in response to bacterial pore-forming toxins. This chain is E3 ubiquitin-protein ligase wwp-1, found in Caenorhabditis elegans.